Consider the following 321-residue polypeptide: Glutaminase (321 aa).

Residues Ser69, Asn120, Glu165, Asn172, Tyr196, Tyr248, and Val266 each contribute to the substrate site.

This sequence belongs to the glutaminase family. In terms of assembly, homotetramer.

The catalysed reaction is L-glutamine + H2O = L-glutamate + NH4(+). This chain is Glutaminase, found in Parabacteroides distasonis (strain ATCC 8503 / DSM 20701 / CIP 104284 / JCM 5825 / NCTC 11152).